Here is a 492-residue protein sequence, read N- to C-terminus: Cytochrome P450 2L1 (492 aa).

Cysteine 436 serves as a coordination point for heme.

It belongs to the cytochrome P450 family. Heme serves as cofactor.

It localises to the endoplasmic reticulum membrane. It is found in the microsome membrane. It catalyses the reaction an organic molecule + reduced [NADPH--hemoprotein reductase] + O2 = an alcohol + oxidized [NADPH--hemoprotein reductase] + H2O + H(+). Functionally, efficient in catalyzing the monooxygenation of benzphetamine, aminopyrine, benzo(a)pyrene, progesterone, and testosterone. The sequence is that of Cytochrome P450 2L1 (CYP2L1) from Panulirus argus (Caribbean spiny lobster).